The chain runs to 252 residues: tRNA-cytidine(32) 2-sulfurtransferase (252 aa).

Residues 37–42 carry the PP-loop motif motif; that stretch reads SGGKDS. [4Fe-4S] cluster contacts are provided by Cys-112, Cys-115, and Cys-202.

This sequence belongs to the TtcA family. In terms of assembly, homodimer. The cofactor is Mg(2+). Requires [4Fe-4S] cluster as cofactor.

The protein resides in the cytoplasm. The catalysed reaction is cytidine(32) in tRNA + S-sulfanyl-L-cysteinyl-[cysteine desulfurase] + AH2 + ATP = 2-thiocytidine(32) in tRNA + L-cysteinyl-[cysteine desulfurase] + A + AMP + diphosphate + H(+). It functions in the pathway tRNA modification. Functionally, catalyzes the ATP-dependent 2-thiolation of cytidine in position 32 of tRNA, to form 2-thiocytidine (s(2)C32). The sulfur atoms are provided by the cysteine/cysteine desulfurase (IscS) system. The polypeptide is tRNA-cytidine(32) 2-sulfurtransferase (Geotalea uraniireducens (strain Rf4) (Geobacter uraniireducens)).